The following is a 397-amino-acid chain: Succinate--CoA ligase [ADP-forming] subunit beta (397 aa).

Residues lysine 9 to glutamate 254 form the ATP-grasp domain. Residues lysine 46, glycine 53 to glycine 55, glutamate 109, serine 112, and glutamate 117 each bind ATP. Mg(2+)-binding residues include asparagine 209 and aspartate 223. Substrate is bound by residues asparagine 274 and glycine 331–methionine 333.

It belongs to the succinate/malate CoA ligase beta subunit family. As to quaternary structure, heterotetramer of two alpha and two beta subunits. The cofactor is Mg(2+).

The enzyme catalyses succinate + ATP + CoA = succinyl-CoA + ADP + phosphate. It carries out the reaction GTP + succinate + CoA = succinyl-CoA + GDP + phosphate. It participates in carbohydrate metabolism; tricarboxylic acid cycle; succinate from succinyl-CoA (ligase route): step 1/1. Functionally, succinyl-CoA synthetase functions in the citric acid cycle (TCA), coupling the hydrolysis of succinyl-CoA to the synthesis of either ATP or GTP and thus represents the only step of substrate-level phosphorylation in the TCA. The beta subunit provides nucleotide specificity of the enzyme and binds the substrate succinate, while the binding sites for coenzyme A and phosphate are found in the alpha subunit. This Nitrobacter hamburgensis (strain DSM 10229 / NCIMB 13809 / X14) protein is Succinate--CoA ligase [ADP-forming] subunit beta.